We begin with the raw amino-acid sequence, 628 residues long: Monoterpene synthase like 2, chloroplastic (628 aa).

Residues Asp-379, Asp-383, and Asp-531 each contribute to the Mg(2+) site. Residues Asp-379–Asp-383 carry the DDXXD motif motif.

Belongs to the terpene synthase family. Tpsd subfamily. The cofactor is Mg(2+). Mn(2+) serves as cofactor.

The protein localises to the plastid. It is found in the chloroplast. It functions in the pathway terpene metabolism; oleoresin biosynthesis. The protein operates within secondary metabolite biosynthesis; terpenoid biosynthesis. In terms of biological role, monoterpene synthase (TPS) involved in the biosynthesis of monoterpene natural products included in conifer oleoresin secretions and volatile emissions; these compounds contribute to biotic and abiotic stress defense against herbivores and pathogens. The sequence is that of Monoterpene synthase like 2, chloroplastic from Pinus banksiana (Jack pine).